Reading from the N-terminus, the 363-residue chain is Carbamoyl phosphate synthase small chain (363 aa).

Residues 1–173 form a CPSase region; that stretch reads MMKAFLVLDN…SKYIFGTHTG (173 aa). L-glutamine contacts are provided by Ser-46, Gly-225, and Gly-227. The Glutamine amidotransferase type-1 domain maps to 177-363; sequence KLAVYDYGVK…YDLVEKTKKG (187 aa). Cys-253 acts as the Nucleophile in catalysis. 5 residues coordinate L-glutamine: Leu-254, Gln-257, Asn-295, Gly-297, and Phe-298. Catalysis depends on residues His-336 and Glu-338.

The protein belongs to the CarA family. Composed of two chains; the small (or glutamine) chain promotes the hydrolysis of glutamine to ammonia, which is used by the large (or ammonia) chain to synthesize carbamoyl phosphate. Tetramer of heterodimers (alpha,beta)4.

It catalyses the reaction hydrogencarbonate + L-glutamine + 2 ATP + H2O = carbamoyl phosphate + L-glutamate + 2 ADP + phosphate + 2 H(+). The catalysed reaction is L-glutamine + H2O = L-glutamate + NH4(+). It functions in the pathway amino-acid biosynthesis; L-arginine biosynthesis; carbamoyl phosphate from bicarbonate: step 1/1. The protein operates within pyrimidine metabolism; UMP biosynthesis via de novo pathway; (S)-dihydroorotate from bicarbonate: step 1/3. In terms of biological role, small subunit of the glutamine-dependent carbamoyl phosphate synthetase (CPSase). CPSase catalyzes the formation of carbamoyl phosphate from the ammonia moiety of glutamine, carbonate, and phosphate donated by ATP, constituting the first step of 2 biosynthetic pathways, one leading to arginine and/or urea and the other to pyrimidine nucleotides. The small subunit (glutamine amidotransferase) binds and cleaves glutamine to supply the large subunit with the substrate ammonia. In Leptospira interrogans serogroup Icterohaemorrhagiae serovar copenhageni (strain Fiocruz L1-130), this protein is Carbamoyl phosphate synthase small chain.